The following is a 430-amino-acid chain: Zinc carboxypeptidase A 1 (430 aa).

Positions 1–22 are cleaved as a signal peptide; sequence MSLNKCLLFALLAIVASASVSA. Residues 124–423 form the Peptidase M14 domain; sequence QYYELDDTYA…DSIVAMATEV (300 aa). H187 and E190 together coordinate Zn(2+). The cysteines at positions 252 and 275 are disulfide-linked. A Zn(2+)-binding site is contributed by H311. Catalysis depends on E386, which acts as the Proton donor/acceptor.

Belongs to the peptidase M14 family. It depends on Zn(2+) as a cofactor.

It is found in the secreted. This is Zinc carboxypeptidase A 1 from Drosophila melanogaster (Fruit fly).